Here is a 264-residue protein sequence, read N- to C-terminus: Rhamnosyltransferase WbbL (264 aa).

This sequence belongs to the glycosyltransferase 2 family.

It participates in bacterial outer membrane biogenesis; lipopolysaccharide biosynthesis. Its function is as follows. Rhamnosyltransferase involved in lipopolysaccharide biosynthesis. The sequence is that of Rhamnosyltransferase WbbL (wbbL) from Escherichia coli (strain K12).